Here is a 988-residue protein sequence, read N- to C-terminus: Centrosomal protein of 120 kDa (988 aa).

The C2 1 domain maps to 1-112 (MVPKSDQLLI…QETKQAPKWY (112 aa)). The tract at residues 354–425 (QNGHEAEHSQ…KPTVKGIGSV (72 aa)) is disordered. Residues 384–394 (SPAPPPPPNQT) show a composition bias toward pro residues. One can recognise a C2 2 domain in the interval 435-569 (TCGASEVVTS…LSSEKTRFLG (135 aa)). The segment at 624–644 (GVPAVDQKPSSPPPAPCPSEI) is disordered. Residues 706-929 (AEYSILEGKL…QYQDCKEIAS (224 aa)) are a coiled coil. Phosphoserine occurs at positions 934 and 938.

Belongs to the CEP120 family. Interacts with TACC2, TACC3, CCDC52, TALPID3. Ubiquitous. Highly expressed in brain, lung and kidney and weakly expressed in heart, liver, small intestine and limb (at protein level). Expressed in brain.

Its subcellular location is the cytoplasm. It is found in the cytoskeleton. The protein localises to the microtubule organizing center. It localises to the centrosome. In terms of biological role, plays a role in the microtubule-dependent coupling of the nucleus and the centrosome. Involved in the processes that regulate centrosome-mediated interkinetic nuclear migration (INM) of neural progenitors and for proper positioning of neurons during brain development. Also implicated in the migration and selfrenewal of neural progenitors. Required for centriole duplication and maturation during mitosis and subsequent ciliogenesis. Required for the recruitment of CEP295 to the proximal end of new-born centrioles at the centriolar microtubule wall during early S phase in a PLK4-dependent manner. In Mus musculus (Mouse), this protein is Centrosomal protein of 120 kDa (Cep120).